The chain runs to 203 residues: Nucleoside triphosphate pyrophosphatase (203 aa).

Aspartate 78 functions as the Proton acceptor in the catalytic mechanism.

Belongs to the Maf family. The cofactor is a divalent metal cation.

Its subcellular location is the cytoplasm. It catalyses the reaction a ribonucleoside 5'-triphosphate + H2O = a ribonucleoside 5'-phosphate + diphosphate + H(+). It carries out the reaction a 2'-deoxyribonucleoside 5'-triphosphate + H2O = a 2'-deoxyribonucleoside 5'-phosphate + diphosphate + H(+). Its function is as follows. Nucleoside triphosphate pyrophosphatase. May have a dual role in cell division arrest and in preventing the incorporation of modified nucleotides into cellular nucleic acids. The chain is Nucleoside triphosphate pyrophosphatase from Prochlorococcus marinus (strain MIT 9301).